Consider the following 437-residue polypeptide: Palmitoyltransferase PFA4 (437 aa).

Residues 1 to 12 lie on the Cytoplasmic side of the membrane; sequence MAGLNDVPFIKG. Residues 13–33 form a helical membrane-spanning segment; the sequence is LAVPSVCALIIFLGYASQFLF. Topologically, residues 34–48 are lumenal; it reads NYSTTLEPGPPTRRE. A helical membrane pass occupies residues 49 to 69; sequence TIIFNGLLLVLWITYYRTVAT. Topologically, residues 70–130 are cytoplasmic; the sequence is DPGRYIFKDR…RNCVSMTTFP (61 aa). Residues 87 to 137 enclose the DHHC domain; that stretch reads RWCNKCAAPKPPRAHHCRHCARCVPRMDHHCPWTRNCVSMTTFPHFLRFLI. Cys-117 acts as the S-palmitoyl cysteine intermediate in catalysis. Residues 131-151 traverse the membrane as a helical segment; the sequence is HFLRFLIYTNMSLWMLGYFLW. Over 152-173 the chain is Lumenal; that stretch reads QRFSKIWEHRRLPAYLGPSFYG. Residues 174–194 traverse the membrane as a helical segment; it reads LICLSLISIVNFVTTVALGIM. Topologically, residues 195-437 are cytoplasmic; the sequence is LINTVKSWVF…KILKKDGLDD (243 aa). The tract at residues 377 to 419 is disordered; the sequence is LDQGLGWVNSDGDRLRDYGVDEEASEPEGVNDDDDDDDDDDVP. Residues 396–419 are compositionally biased toward acidic residues; that stretch reads VDEEASEPEGVNDDDDDDDDDDVP.

This sequence belongs to the DHHC palmitoyltransferase family. PFA4 subfamily.

Its subcellular location is the endoplasmic reticulum membrane. The catalysed reaction is L-cysteinyl-[protein] + hexadecanoyl-CoA = S-hexadecanoyl-L-cysteinyl-[protein] + CoA. Functionally, mediates the reversible addition of palmitate to target proteins, thereby regulating their membrane association and biological function. The protein is Palmitoyltransferase PFA4 of Gibberella zeae (strain ATCC MYA-4620 / CBS 123657 / FGSC 9075 / NRRL 31084 / PH-1) (Wheat head blight fungus).